The primary structure comprises 511 residues: 2-isopropylmalate synthase (511 aa).

Residues 5 to 267 (IQIFDTTLRD…QTQINLEETK (263 aa)) form the Pyruvate carboxyltransferase domain. Positions 14, 202, 204, and 238 each coordinate Mn(2+). Positions 391 to 511 (KVETLQLQFV…NTKVEEGIHS (121 aa)) are regulatory domain.

The protein belongs to the alpha-IPM synthase/homocitrate synthase family. LeuA type 1 subfamily. In terms of assembly, homodimer. Mn(2+) is required as a cofactor.

It localises to the cytoplasm. It catalyses the reaction 3-methyl-2-oxobutanoate + acetyl-CoA + H2O = (2S)-2-isopropylmalate + CoA + H(+). The protein operates within amino-acid biosynthesis; L-leucine biosynthesis; L-leucine from 3-methyl-2-oxobutanoate: step 1/4. In terms of biological role, catalyzes the condensation of the acetyl group of acetyl-CoA with 3-methyl-2-oxobutanoate (2-ketoisovalerate) to form 3-carboxy-3-hydroxy-4-methylpentanoate (2-isopropylmalate). In Staphylococcus saprophyticus subsp. saprophyticus (strain ATCC 15305 / DSM 20229 / NCIMB 8711 / NCTC 7292 / S-41), this protein is 2-isopropylmalate synthase.